The sequence spans 498 residues: Calcium-dependent protein kinase 22 (498 aa).

A lipid anchor (N-myristoyl glycine) is attached at G2. Residues 36–305 (YSFGDELGKG…AADVLEHPWM (270 aa)) enclose the Protein kinase domain. Residues 42–50 (LGKGNFGTT) and K65 each bind ATP. The active-site Proton acceptor is the D164. At S204 the chain carries Phosphoserine. The tract at residues 309–339 (APDKPIDNVVLSRMKQFRAMNKLKKLALKVI) is autoinhibitory domain. EF-hand domains follow at residues 346–381 (EEIK…HGSK), 382–417 (LSET…RHRL), 418–453 (ERDE…HGMG), and 454–488 (DEAN…GILQ). Ca(2+) contacts are provided by D359, D361, S363, S365, E370, D395, D397, N399, T401, E406, D431, D433, S435, H437, E442, D466, N468, D470, K472, and E477.

It belongs to the protein kinase superfamily. Ser/Thr protein kinase family. CDPK subfamily.

The protein resides in the membrane. The catalysed reaction is L-seryl-[protein] + ATP = O-phospho-L-seryl-[protein] + ADP + H(+). It carries out the reaction L-threonyl-[protein] + ATP = O-phospho-L-threonyl-[protein] + ADP + H(+). With respect to regulation, activated by calcium. Autophosphorylation may play an important role in the regulation of the kinase activity. May play a role in signal transduction pathways that involve calcium as a second messenger. The polypeptide is Calcium-dependent protein kinase 22 (CPK22) (Arabidopsis thaliana (Mouse-ear cress)).